The following is a 64-amino-acid chain: DNA gyrase inhibitor YacG (64 aa).

Cys9, Cys12, Cys28, and Cys32 together coordinate Zn(2+). The tract at residues 45 to 64 (KRIPSAGDLSDSDDWSEQQP) is disordered. Over residues 54-64 (SDSDDWSEQQP) the composition is skewed to acidic residues.

It belongs to the DNA gyrase inhibitor YacG family. As to quaternary structure, interacts with GyrB. Requires Zn(2+) as cofactor.

In terms of biological role, inhibits all the catalytic activities of DNA gyrase by preventing its interaction with DNA. Acts by binding directly to the C-terminal domain of GyrB, which probably disrupts DNA binding by the gyrase. The chain is DNA gyrase inhibitor YacG from Klebsiella pneumoniae (strain 342).